The chain runs to 332 residues: L-lactate dehydrogenase A chain (332 aa).

A2 is subject to N-acetylalanine. K5 is subject to N6-acetyllysine; alternate. K5 is modified (N6-succinyllysine; alternate). Residue K14 is modified to N6-acetyllysine. 29 to 57 contacts NAD(+); sequence GAVGMACAISILMKDLADELALVDVMEDK. K57 carries the post-translational modification N6-acetyllysine; alternate. A Glycyl lysine isopeptide (Lys-Gly) (interchain with G-Cter in SUMO2); alternate cross-link involves residue K57. K81 carries the post-translational modification N6-acetyllysine. NAD(+) is bound at residue R99. R106 contributes to the substrate binding site. N6-acetyllysine; alternate is present on K118. Residue K118 is modified to N6-succinyllysine; alternate. Position 126 is an N6-acetyllysine (K126). An NAD(+)-binding site is contributed by N138. Residues N138 and R169 each coordinate substrate. H193 (proton acceptor) is an active-site residue. K224 and K232 each carry N6-acetyllysine. Y239 carries the post-translational modification Phosphotyrosine. At K243 the chain carries N6-acetyllysine. T248 contributes to the substrate binding site. T309 bears the Phosphothreonine mark. Residue S310 is modified to Phosphoserine. The residue at position 318 (K318) is an N6-acetyllysine; alternate. The residue at position 318 (K318) is an N6-succinyllysine; alternate. Residue T322 is modified to Phosphothreonine.

The protein belongs to the LDH/MDH superfamily. LDH family. In terms of assembly, homotetramer. Interacts with PTEN upstream reading frame protein MP31. In terms of processing, ISGylated.

It is found in the cytoplasm. The enzyme catalyses (S)-lactate + NAD(+) = pyruvate + NADH + H(+). Its pathway is fermentation; pyruvate fermentation to lactate; (S)-lactate from pyruvate: step 1/1. In terms of biological role, interconverts simultaneously and stereospecifically pyruvate and lactate with concomitant interconversion of NADH and NAD(+). The polypeptide is L-lactate dehydrogenase A chain (LDHA) (Oryctolagus cuniculus (Rabbit)).